The sequence spans 438 residues: uncharacterized protein (438 aa).

His59 serves as a coordination point for Zn(2+). Catalysis depends on Glu62, which acts as the Proton acceptor. Zn(2+) contacts are provided by His63 and Glu139.

It belongs to the peptidase M16 family. The cofactor is Zn(2+).

This is an uncharacterized protein from Mycobacterium bovis (strain ATCC BAA-935 / AF2122/97).